A 388-amino-acid chain; its full sequence is Succinate--CoA ligase [ADP-forming] subunit beta (388 aa).

The 236-residue stretch at 9–244 (KEILRKFGVA…LDEEDPAEIE (236 aa)) folds into the ATP-grasp domain. Residues K46, 53–55 (GRG), E99, A102, and E107 contribute to the ATP site. Mg(2+) is bound by residues N199 and D213. Substrate is bound by residues N264 and 321–323 (GIM).

Belongs to the succinate/malate CoA ligase beta subunit family. In terms of assembly, heterotetramer of two alpha and two beta subunits. The cofactor is Mg(2+).

It carries out the reaction succinate + ATP + CoA = succinyl-CoA + ADP + phosphate. The catalysed reaction is GTP + succinate + CoA = succinyl-CoA + GDP + phosphate. It participates in carbohydrate metabolism; tricarboxylic acid cycle; succinate from succinyl-CoA (ligase route): step 1/1. Its function is as follows. Succinyl-CoA synthetase functions in the citric acid cycle (TCA), coupling the hydrolysis of succinyl-CoA to the synthesis of either ATP or GTP and thus represents the only step of substrate-level phosphorylation in the TCA. The beta subunit provides nucleotide specificity of the enzyme and binds the substrate succinate, while the binding sites for coenzyme A and phosphate are found in the alpha subunit. In Burkholderia cenocepacia (strain ATCC BAA-245 / DSM 16553 / LMG 16656 / NCTC 13227 / J2315 / CF5610) (Burkholderia cepacia (strain J2315)), this protein is Succinate--CoA ligase [ADP-forming] subunit beta.